Reading from the N-terminus, the 148-residue chain is MADFRHIVRVAGVDLDGNKQLRWALTAIKGVGINFATMVCRVAGLDPFMKAGYLTDEQVKKIEEILQDPVAHGIPRWAVNRPKDYETGRDLHLITAKLDMAIREDIMRLRRIRAYRGIRHELGLPVRGQRTRSNFRRGQTVGVSRKKK.

Belongs to the universal ribosomal protein uS13 family. Part of the 30S ribosomal subunit. Forms a loose heterodimer with protein S19. Forms two bridges to the 50S subunit in the 70S ribosome.

In terms of biological role, located at the top of the head of the 30S subunit, it contacts several helices of the 16S rRNA. In the 70S ribosome it contacts the 23S rRNA (bridge B1a) and protein L5 of the 50S subunit (bridge B1b), connecting the 2 subunits; these bridges are implicated in subunit movement. This Pyrococcus abyssi (strain GE5 / Orsay) protein is Small ribosomal subunit protein uS13.